We begin with the raw amino-acid sequence, 74 residues long: MCCGPLGFCGPCSPCGGPCGPCGPCGPCGSCCSPCGSCCAPCGPCGPCGPCCGGCGPCGPCGPCCGPCRPYCGC.

The protein belongs to the MST(3)CGP family. As to expression, testis.

The polypeptide is Male-specific sperm protein Mst84Db (Mst84Db) (Drosophila melanogaster (Fruit fly)).